We begin with the raw amino-acid sequence, 430 residues long: Cell division protein FtsZ (430 aa).

GTP contacts are provided by residues 76 to 80 (GGGCN), 163 to 165 (GTG), Glu-194, Arg-198, and Asp-242. The interval 374–418 (KEKPQAKTSSKPVLSGPPAGVETVPSTTTPEDPLGEIPMAPELDI) is disordered.

The protein belongs to the FtsZ family. Homodimer. Polymerizes to form a dynamic ring structure in a strictly GTP-dependent manner. Interacts directly with several other division proteins.

The protein resides in the cytoplasm. Functionally, essential cell division protein that forms a contractile ring structure (Z ring) at the future cell division site. The regulation of the ring assembly controls the timing and the location of cell division. One of the functions of the FtsZ ring is to recruit other cell division proteins to the septum to produce a new cell wall between the dividing cells. Binds GTP and shows GTPase activity. This Synechocystis sp. (strain ATCC 27184 / PCC 6803 / Kazusa) protein is Cell division protein FtsZ.